Consider the following 632-residue polypeptide: tRNA uridine 5-carboxymethylaminomethyl modification enzyme MnmG (632 aa).

FAD contacts are provided by residues 15–20 (GAGHAG), Ile127, and Ser182. Position 276–290 (276–290 (GPRYCPSIEDKIVRF)) interacts with NAD(+). Gln373 lines the FAD pocket.

Belongs to the MnmG family. Homodimer. Heterotetramer of two MnmE and two MnmG subunits. FAD serves as cofactor.

It is found in the cytoplasm. In terms of biological role, NAD-binding protein involved in the addition of a carboxymethylaminomethyl (cmnm) group at the wobble position (U34) of certain tRNAs, forming tRNA-cmnm(5)s(2)U34. The protein is tRNA uridine 5-carboxymethylaminomethyl modification enzyme MnmG of Streptococcus pyogenes serotype M6 (strain ATCC BAA-946 / MGAS10394).